The primary structure comprises 306 residues: tRNA (guanine-N(1)-)-methyltransferase (306 aa).

S-adenosyl-L-methionine is bound by residues Gly-157 and 182–187 (IGDYVL).

It belongs to the RNA methyltransferase TrmD family. As to quaternary structure, homodimer.

The protein localises to the cytoplasm. The enzyme catalyses guanosine(37) in tRNA + S-adenosyl-L-methionine = N(1)-methylguanosine(37) in tRNA + S-adenosyl-L-homocysteine + H(+). Its function is as follows. Specifically methylates guanosine-37 in various tRNAs. The sequence is that of tRNA (guanine-N(1)-)-methyltransferase from Bifidobacterium adolescentis (strain ATCC 15703 / DSM 20083 / NCTC 11814 / E194a).